The chain runs to 455 residues: Mu-like prophage FluMu DNA circularization protein (455 aa).

Positions 368–387 (VILDNADAEQWTSYAALEQY) form a DNA-binding region, H-T-H motif.

The protein to phage Mu protein N.

This Haemophilus influenzae (strain ATCC 51907 / DSM 11121 / KW20 / Rd) protein is Mu-like prophage FluMu DNA circularization protein.